The chain runs to 101 residues: Histone H1-like protein EM6 (101 aa).

Basic residues-rich tracts occupy residues Ala1–Lys35 and Ala58–Arg101. Residues Ala1–Arg101 form a disordered region. 4 repeat units span residues Lys3–Arg4, Ser5–Arg6, Ser7–Arg8, and Lys9–Arg10. The 10 X 2 AA approximate tandem repeats of [SK]-R stretch occupies residues Lys3–Arg22. One copy of the 5; approximate repeat lies at Ser11–Ala12. 5 repeat units span residues Ser13 to Arg14, Lys15 to Arg16, Ser17 to Arg18, Ser19 to Arg20, and Lys21 to Arg22. Positions His32–Arg65 are globular.

Sperm.

The protein resides in the nucleus. Its subcellular location is the chromosome. The polypeptide is Histone H1-like protein EM6 (Ensis minor (Razor shell)).